The primary structure comprises 715 residues: Integrator complex subunit 13 (715 aa).

2 disordered regions span residues 572–612 and 626–659; these read KPPE…SERI and AEVIKDSPDSPEPPNKKPHIVIEDTGPAEKSKGP. Residues 581–591 carry the Nuclear localization signal (NLS) motif; the sequence is KRGRKREDKEE. The cleavage module binding motif (CMBM) stretch occupies residues 658-703; sequence GPMSLLSLWSSRINTANSRKHQEFVGRLNSVNNKAELYQHLKEENG.

The protein belongs to the Integrator subunit 13 family. Component of the Integrator complex, composed of core subunits INTS1, INTS2, INTS3, INTS4, INTS5, INTS6, INTS7, INTS8, INTS9/RC74, INTS10, INTS11/CPSF3L, INTS12, INTS13, INTS14 and INTS15. The core complex associates with protein phosphatase 2A subunits PPP2CA and PPP2R1A, to form the Integrator-PP2A (INTAC) complex. INTS13 is part of the tail subcomplex, composed of INTS10, INTS13, INTS14 and INTS15.

It localises to the nucleus. Its subcellular location is the cytoplasm. Functionally, component of the integrator complex, a multiprotein complex that terminates RNA polymerase II (Pol II) transcription in the promoter-proximal region of genes. The integrator complex provides a quality checkpoint during transcription elongation by driving premature transcription termination of transcripts that are unfavorably configured for transcriptional elongation: the complex terminates transcription by (1) catalyzing dephosphorylation of the C-terminal domain (CTD) of Pol II subunit POLR2A/RPB1 and SUPT5H/SPT5, (2) degrading the exiting nascent RNA transcript via endonuclease activity and (3) promoting the release of Pol II from bound DNA. The integrator complex is also involved in terminating the synthesis of non-coding Pol II transcripts, such as enhancer RNAs (eRNAs), small nuclear RNAs (snRNAs), telomerase RNAs and long non-coding RNAs (lncRNAs). Within the integrator complex, INTS13 is part of the integrator tail module and acts as a platform for the recruitment of transcription factors at promoters. Plays a role in gastrulation and early embryogenesis. This is Integrator complex subunit 13 from Xenopus laevis (African clawed frog).